The primary structure comprises 450 residues: UDP-N-acetylmuramoylalanine--D-glutamate ligase (450 aa).

ATP is bound at residue 119–125 (GSNGKTT).

This sequence belongs to the MurCDEF family.

The protein resides in the cytoplasm. It catalyses the reaction UDP-N-acetyl-alpha-D-muramoyl-L-alanine + D-glutamate + ATP = UDP-N-acetyl-alpha-D-muramoyl-L-alanyl-D-glutamate + ADP + phosphate + H(+). It participates in cell wall biogenesis; peptidoglycan biosynthesis. Cell wall formation. Catalyzes the addition of glutamate to the nucleotide precursor UDP-N-acetylmuramoyl-L-alanine (UMA). This is UDP-N-acetylmuramoylalanine--D-glutamate ligase from Streptococcus pneumoniae (strain Hungary19A-6).